A 156-amino-acid chain; its full sequence is Large ribosomal subunit protein eL29 (156 aa).

Residues 1–26 (MAKSKNHTTHNQSRKWHRNGIKKPRS) show a composition bias toward basic residues. Disordered regions lie at residues 1–35 (MAKS…LKGV) and 116–156 (RRLC…VKAP). N6-methyllysine is present on lysine 5. Position 31 is a phosphoserine (serine 31). Lysine 33 carries the N6-acetyllysine modification. Tandem repeats lie at residues 129 to 136 (AEAKAPAK) and 137 to 144 (AQAKAPAQ). The tract at residues 129 to 144 (AEAKAPAKAQAKAPAQ) is 2 X 8 AA tandem repeats of A-X-A-K-A-P-A-[KQ]. Residues 134–156 (PAKAQAKAPAQAPKGAQAPVKAP) are compositionally biased toward low complexity.

It belongs to the eukaryotic ribosomal protein eL29 family. As to quaternary structure, component of the large ribosomal subunit.

The protein localises to the cytoplasm. In terms of biological role, component of the large ribosomal subunit. The ribosome is a large ribonucleoprotein complex responsible for the synthesis of proteins in the cell. The sequence is that of Large ribosomal subunit protein eL29 (Rpl29) from Rattus norvegicus (Rat).